The chain runs to 205 residues: Nitrophorin-4 (205 aa).

The signal sequence occupies residues 1–21; it reads MKSYTSLLAVAILCLFGGVNG. 2 disulfides stabilise this stretch: Cys-23–Cys-143 and Cys-62–Cys-192. His-80 is a heme binding site.

The protein belongs to the calycin superfamily. Nitrophorin family. Heme b is required as a cofactor. As to expression, salivary gland (at protein level).

It is found in the secreted. It carries out the reaction 3 nitrite + 2 H(+) = 2 nitric oxide + nitrate + H2O. In terms of biological role, heme-based protein that delivers nitric oxide gas (NO) to the victim while feeding, resulting in vasodilation and inhibition of platelet aggregation. Reversibly binds nitric oxide (NO). Also binds tightly to histamine, which is released by the host to induce wound healing. NO release is pH dependent and linked to loop dynamics. This chain is Nitrophorin-4, found in Rhodnius prolixus (Triatomid bug).